A 639-amino-acid polypeptide reads, in one-letter code: Sperm-associated antigen 16 protein (639 aa).

A coiled-coil region spans residues 146–218 (DVYSQVMLLE…GLKLHYASYE (73 aa)). Residues 280-333 (RESGDRAGHSCEKENSSEGPTQKSLREAREEVGYKSKLKNEKKDSEFPVDMQPD) form a disordered region. Basic and acidic residues-rich tracts occupy residues 281-295 (ESGD…KENS) and 303-325 (SLRE…KDSE). WD repeat units lie at residues 358–397 (LHEL…VLLT), 400–439 (GHTD…CTLT), 442–481 (GHNH…CRYT), 484–523 (GHTD…CEQS), 526–565 (GHMH…PIVS), 568–608 (VGPS…HKLV), and 609–639 (GHES…RLWI).

In terms of assembly, interacts with SPAG6 and STK36. In terms of processing, phosphorylated by TSSK2. In terms of tissue distribution, expressed in testis.

The protein localises to the cytoplasm. It is found in the cytoskeleton. The protein resides in the cilium axoneme. It localises to the flagellum axoneme. Its subcellular location is the cell projection. The protein localises to the cilium. It is found in the flagellum. Necessary for sperm flagellar function. Plays a role in motile ciliogenesis. May help to recruit STK36 to the cilium or apical surface of the cell to initiate subsequent steps of construction of the central pair apparatus of motile cilia. This is Sperm-associated antigen 16 protein (Spag16) from Mus musculus (Mouse).